Consider the following 299-residue polypeptide: Oxygen-dependent coproporphyrinogen-III oxidase (299 aa).

Residue S92 coordinates substrate. H96 and H106 together coordinate Mn(2+). H106 acts as the Proton donor in catalysis. 108 to 110 (NVR) provides a ligand contact to substrate. Mn(2+)-binding residues include H145 and H175. The important for dimerization stretch occupies residues 240-275 (YVEFNLVWDRGTLFGLQTGGRTESILMSMPPLVRWE). 258 to 260 (GGR) contributes to the substrate binding site.

Belongs to the aerobic coproporphyrinogen-III oxidase family. Homodimer. The cofactor is Mn(2+).

It localises to the cytoplasm. The enzyme catalyses coproporphyrinogen III + O2 + 2 H(+) = protoporphyrinogen IX + 2 CO2 + 2 H2O. It participates in porphyrin-containing compound metabolism; protoporphyrin-IX biosynthesis; protoporphyrinogen-IX from coproporphyrinogen-III (O2 route): step 1/1. Involved in the heme biosynthesis. Catalyzes the aerobic oxidative decarboxylation of propionate groups of rings A and B of coproporphyrinogen-III to yield the vinyl groups in protoporphyrinogen-IX. The sequence is that of Oxygen-dependent coproporphyrinogen-III oxidase from Escherichia coli (strain SE11).